The primary structure comprises 74 residues: DNA-directed RNA polymerase subunit omega (74 aa).

The protein belongs to the RNA polymerase subunit omega family. As to quaternary structure, the RNAP catalytic core consists of 2 alpha, 1 beta, 1 beta' and 1 omega subunit. When a sigma factor is associated with the core the holoenzyme is formed, which can initiate transcription.

It carries out the reaction RNA(n) + a ribonucleoside 5'-triphosphate = RNA(n+1) + diphosphate. Promotes RNA polymerase assembly. Latches the N- and C-terminal regions of the beta' subunit thereby facilitating its interaction with the beta and alpha subunits. This chain is DNA-directed RNA polymerase subunit omega, found in Hydrogenovibrio crunogenus (strain DSM 25203 / XCL-2) (Thiomicrospira crunogena).